Consider the following 66-residue polypeptide: UPF0434 protein Jann_0424 (66 aa).

Belongs to the UPF0434 family.

The protein is UPF0434 protein Jann_0424 of Jannaschia sp. (strain CCS1).